Reading from the N-terminus, the 397-residue chain is ATP-dependent RNA helicase eIF4A (397 aa).

The Q motif motif lies at 23–51 (YKFDDLNLKPNIVRGIFGYGYETPSAIQQ). The Helicase ATP-binding domain maps to 54 to 224 (ILPITEGRDV…TKFMNNPVRI (171 aa)). ATP is bound at residue 67–74 (AQSGTGKT). The DEAD box motif lies at 172 to 175 (DEAD). A Helicase C-terminal domain is found at 235–396 (GIKQFYINVE…EMPADIGALF (162 aa)).

The protein belongs to the DEAD box helicase family. eIF4A subfamily. In terms of assembly, component of the eIF4F complex, which composition varies with external and internal environmental conditions. It is composed of at least eIF4A, eIF4E and eIF4G.

It is found in the cytoplasm. It carries out the reaction ATP + H2O = ADP + phosphate + H(+). Functionally, ATP-dependent RNA helicase which is a subunit of the eIF4F complex involved in cap recognition and is required for mRNA binding to ribosome. In the current model of translation initiation, eIF4A unwinds RNA secondary structures in the 5'-UTR of mRNAs which is necessary to allow efficient binding of the small ribosomal subunit, and subsequent scanning for the initiator codon. This Scheffersomyces stipitis (strain ATCC 58785 / CBS 6054 / NBRC 10063 / NRRL Y-11545) (Yeast) protein is ATP-dependent RNA helicase eIF4A (TIF1).